A 266-amino-acid chain; its full sequence is uncharacterized protein (266 aa).

The N-terminal stretch at 1-22 (MRYLKKLAWFISVIILGIFIIG) is a signal peptide. A lipid anchor (N-palmitoyl cysteine) is attached at Cys-23. Cys-23 is lipidated: S-diacylglycerol cysteine.

It belongs to the staphylococcal tandem lipoprotein family.

Its subcellular location is the cell membrane. This is an uncharacterized protein from Staphylococcus aureus (strain USA300).